Reading from the N-terminus, the 1886-residue chain is Highly reducing polyketide synthase (1886 aa).

Residues 11–434 (TQDVAIVGLS…GANAHAVLDD (424 aa)) enclose the Ketosynthase family 3 (KS3) domain. Catalysis depends on for beta-ketoacyl synthase activity residues Cys182, His317, and His357. Residues 483 to 568 (FLFSGQDQQS…VNNDLANTKK (86 aa)) are malonyl-CoA:ACP transacylase (MAT) domain. Positions 616-750 (RSLIGAPQPS…GLLSIEYESS (135 aa)) are N-terminal hotdog fold. Residues 616-926 (RSLIGAPQPS…CTAISEATNP (311 aa)) form the PKS/mFAS DH domain. A dehydratase (DH) domain region spans residues 618–924 (LIGAPQPSYG…LHCTAISEAT (307 aa)). His648 acts as the Proton acceptor; for dehydratase activity in catalysis. The interval 778-926 (HTTQSPKALY…CTAISEATNP (149 aa)) is C-terminal hotdog fold. Asp838 acts as the Proton donor; for dehydratase activity in catalysis. The tract at residues 1169 to 1480 (GMLDEIYFEA…AGKHMGKVAL (312 aa)) is enoylreductase (ER) domain. Residues 1503-1681 (ATYVLVGGFG…VSLDLGLMRD (179 aa)) form a catalytic ketoreductase (KRc) domain region. Residues 1802–1879 (DVTDLVLEIL…DLVDKIVAKS (78 aa)) form the Carrier domain. Residue Ser1839 is modified to O-(pantetheine 4'-phosphoryl)serine.

It participates in mycotoxin biosynthesis. Highly reducing polyketide synthase; part of the gene cluster that mediates the biosynthesis of the selective antifungal agent ascochitine, an o-quinone methide that plays a possible protective role against other microbial competitors in nature and is considered to be important for pathogenicity of legume-associated Didymella species. The pathway probably begins with the synthesis of a keto-aldehyde intermediate by the ascochitine non-reducing polyketide synthase pksAC from successive condensations of 4 malonyl-CoA units, presumably with a simple acetyl-CoA starter unit. Release of the keto-aldehyde intermediate is consistent with the presence of the C-terminal reductive release domain. The HR-PKS (orf7) probably makes a diketide starter unit which is passed to the non-reducing polyketide synthase pksAC for further extension, producing ascochital and ascochitine. The aldehyde dehydrogenase (orf1), the 2-oxoglutarate-dependent dioxygenase (orf3) and the dehydrogenase (orf9) are probably involved in subsequent oxidations of methyl groups to the carboxylic acid of the heterocyclic ring. The ascochitine gene cluster also includes a gene encoding a short peptide with a cupin domain (orf2) that is often found in secondary metabolite gene clusters and which function has still to be determined. In Didymella fabae (Leaf and pod spot disease fungus), this protein is Highly reducing polyketide synthase.